Reading from the N-terminus, the 459-residue chain is Putrescine aminotransferase (459 aa).

Pyridoxal 5'-phosphate is bound by residues 150–151 (GT) and Gln274. At Lys300 the chain carries N6-(pyridoxal phosphate)lysine. Thr332 is a pyridoxal 5'-phosphate binding site.

It belongs to the class-III pyridoxal-phosphate-dependent aminotransferase family. Putrescine aminotransferase subfamily. The cofactor is pyridoxal 5'-phosphate.

The enzyme catalyses an alkane-alpha,omega-diamine + 2-oxoglutarate = an omega-aminoaldehyde + L-glutamate. It carries out the reaction putrescine + 2-oxoglutarate = 1-pyrroline + L-glutamate + H2O. The catalysed reaction is cadaverine + 2-oxoglutarate = 5-aminopentanal + L-glutamate. Its pathway is amine and polyamine degradation; putrescine degradation; 4-aminobutanal from putrescine (transaminase route): step 1/1. In terms of biological role, catalyzes the aminotransferase reaction from putrescine to 2-oxoglutarate, leading to glutamate and 4-aminobutanal, which spontaneously cyclizes to form 1-pyrroline. This is the first step in one of two pathways for putrescine degradation, where putrescine is converted into 4-aminobutanoate (gamma-aminobutyrate or GABA) via 4-aminobutanal. Also functions as a cadaverine transaminase in a a L-lysine degradation pathway to succinate that proceeds via cadaverine, glutarate and L-2-hydroxyglutarate. The sequence is that of Putrescine aminotransferase from Salmonella paratyphi A (strain ATCC 9150 / SARB42).